The sequence spans 249 residues: 5'-nucleotidase SurE (249 aa).

4 residues coordinate a divalent metal cation: D8, D9, S39, and N96.

Belongs to the SurE nucleotidase family. The cofactor is a divalent metal cation.

Its subcellular location is the cytoplasm. The enzyme catalyses a ribonucleoside 5'-phosphate + H2O = a ribonucleoside + phosphate. In terms of biological role, nucleotidase that shows phosphatase activity on nucleoside 5'-monophosphates. The chain is 5'-nucleotidase SurE from Clostridium tetani (strain Massachusetts / E88).